The sequence spans 344 residues: Methionine import ATP-binding protein MetN (344 aa).

Residues 2–241 (IEINRVNKIF…PKTALAQEFI (240 aa)) form the ABC transporter domain. ATP is bound at residue 38 to 45 (GSSGAGKS).

This sequence belongs to the ABC transporter superfamily. Methionine importer (TC 3.A.1.24) family. As to quaternary structure, the complex is composed of two ATP-binding proteins (MetN), two transmembrane proteins (MetI) and a solute-binding protein (MetQ).

It localises to the cell inner membrane. It catalyses the reaction L-methionine(out) + ATP + H2O = L-methionine(in) + ADP + phosphate + H(+). The catalysed reaction is D-methionine(out) + ATP + H2O = D-methionine(in) + ADP + phosphate + H(+). In terms of biological role, part of the ABC transporter complex MetNIQ involved in methionine import. Responsible for energy coupling to the transport system. This Aliivibrio fischeri (strain ATCC 700601 / ES114) (Vibrio fischeri) protein is Methionine import ATP-binding protein MetN.